The chain runs to 164 residues: 6,7-dimethyl-8-ribityllumazine synthase (164 aa).

5-amino-6-(D-ribitylamino)uracil-binding positions include F24, 62–64 (SFE), and 86–88 (AVI). 91-92 (QT) contributes to the (2S)-2-hydroxy-3-oxobutyl phosphate binding site. Catalysis depends on H94, which acts as the Proton donor. F119 is a binding site for 5-amino-6-(D-ribitylamino)uracil. R133 provides a ligand contact to (2S)-2-hydroxy-3-oxobutyl phosphate.

It belongs to the DMRL synthase family.

The catalysed reaction is (2S)-2-hydroxy-3-oxobutyl phosphate + 5-amino-6-(D-ribitylamino)uracil = 6,7-dimethyl-8-(1-D-ribityl)lumazine + phosphate + 2 H2O + H(+). It participates in cofactor biosynthesis; riboflavin biosynthesis; riboflavin from 2-hydroxy-3-oxobutyl phosphate and 5-amino-6-(D-ribitylamino)uracil: step 1/2. Functionally, catalyzes the formation of 6,7-dimethyl-8-ribityllumazine by condensation of 5-amino-6-(D-ribitylamino)uracil with 3,4-dihydroxy-2-butanone 4-phosphate. This is the penultimate step in the biosynthesis of riboflavin. In Synechocystis sp. (strain ATCC 27184 / PCC 6803 / Kazusa), this protein is 6,7-dimethyl-8-ribityllumazine synthase.